The following is a 1037-amino-acid chain: Presequence protease, mitochondrial (1037 aa).

Residues 1–15 (MWRCGGRQGLGVLRR) constitute a mitochondrion transit peptide. Zn(2+) is bound at residue histidine 104. Glutamate 107 (proton acceptor) is an active-site residue. Zn(2+) contacts are provided by histidine 108 and glutamate 205. Cysteines 119 and 556 form a disulfide. Lysine 759 carries the post-translational modification N6-acetyllysine. The residue at position 770 (lysine 770) is an N6-acetyllysine; alternate. The residue at position 770 (lysine 770) is an N6-succinyllysine; alternate. The interval 803–834 (IGRSKKERRPVRPHTVEKPVPSSSGGDAHVPH) is disordered. Positions 804–814 (GRSKKERRPVR) are enriched in basic residues. Residue lysine 849 is modified to N6-succinyllysine. Lysine 884 is subject to N6-acetyllysine. Lysine 946 carries the N6-succinyllysine modification.

This sequence belongs to the peptidase M16 family. PreP subfamily. In terms of assembly, monomer and homodimer; homodimerization is induced by binding of the substrate. The cofactor is Zn(2+). Post-translationally, a disulfide bond locks the enzyme in the closed conformation preventing substrate entry into the catalytic chamber.

The protein localises to the mitochondrion matrix. Its activity is regulated as follows. Mainly exists in a closed and catalytically competent conformation but a closed-to-open switch allows substrate entry into the catalytic chamber. Substrate binding induces closure and dimerization. A disulfide bond may lock the enzyme in a closed conformation preventing substrate entry into the catalytic chamber, participating in redox regulation of the enzyme. Inhibited by metal-chelating agents. Inhibited by nickel and zinc excess, and slightly activated by manganese. Its function is as follows. Metalloendopeptidase of the mitochondrial matrix that functions in peptide cleavage and degradation rather than in protein processing. Has an ATP-independent activity. Specifically cleaves peptides in the range of 5 to 65 residues. Shows a preference for cleavage after small polar residues and before basic residues, but without any positional preference. Degrades the transit peptides of mitochondrial proteins after their cleavage. Also degrades other unstructured peptides. It is also able to degrade amyloid-beta protein 40, one of the peptides produced by APP processing, when it accumulates in mitochondrion. It is a highly efficient protease, at least toward amyloid-beta protein 40. Cleaves that peptide at a specific position and is probably not processive, releasing digested peptides intermediates that can be further cleaved subsequently. It is also able to degrade amyloid-beta protein 42. In Pongo abelii (Sumatran orangutan), this protein is Presequence protease, mitochondrial.